Consider the following 388-residue polypeptide: Succinate--CoA ligase [ADP-forming] subunit beta (388 aa).

The ATP-grasp domain maps to 9-244 (KEIFRSMGVA…LEEEDPKEIE (236 aa)). Residues Lys-46, 53-55 (GRG), Glu-99, Cys-102, and Glu-107 each bind ATP. The Mg(2+) site is built by Asn-199 and Asp-213. Residues Asn-264 and 321–323 (GIM) contribute to the substrate site.

This sequence belongs to the succinate/malate CoA ligase beta subunit family. As to quaternary structure, heterotetramer of two alpha and two beta subunits. The cofactor is Mg(2+).

It carries out the reaction succinate + ATP + CoA = succinyl-CoA + ADP + phosphate. The catalysed reaction is GTP + succinate + CoA = succinyl-CoA + GDP + phosphate. The protein operates within carbohydrate metabolism; tricarboxylic acid cycle; succinate from succinyl-CoA (ligase route): step 1/1. In terms of biological role, succinyl-CoA synthetase functions in the citric acid cycle (TCA), coupling the hydrolysis of succinyl-CoA to the synthesis of either ATP or GTP and thus represents the only step of substrate-level phosphorylation in the TCA. The beta subunit provides nucleotide specificity of the enzyme and binds the substrate succinate, while the binding sites for coenzyme A and phosphate are found in the alpha subunit. The sequence is that of Succinate--CoA ligase [ADP-forming] subunit beta from Staphylococcus aureus (strain MRSA252).